The following is a 2661-amino-acid chain: 3-methylorcinaldehyde synthase tropA (2661 aa).

The interval 14 to 271 (LLFGSQSLSF…HWSGHEAEVD (258 aa)) is N-terminal acylcarrier protein transacylase domain (SAT). The Ketosynthase family 3 (KS3) domain maps to 380 to 796 (GDDIAIVGAS…GSNASMVITQ (417 aa)). Active-site for beta-ketoacyl synthase activity residues include Cys545, His680, and His719. The segment at 901-1211 (LCFGGQVSTF…QAMSITTDKG (311 aa)) is malonyl-CoA:ACP transacylase (MAT) domain. Residue Ser988 is the For acyl/malonyl transferase activity of the active site. An N-terminal hotdog fold region spans residues 1283-1425 (PDTILSFVGY…GTLVVVPMED (143 aa)). Positions 1283–1600 (PDTILSFVGY…FVRIPRKGLA (318 aa)) constitute a PKS/mFAS DH domain. The segment at 1288-1599 (SFVGYQDSNK…QFVRIPRKGL (312 aa)) is product template (PT) domain. His1318 acts as the Proton acceptor; for dehydratase activity in catalysis. The tract at residues 1453–1600 (AEEILQGRTI…FVRIPRKGLA (148 aa)) is C-terminal hotdog fold. The active-site Proton donor; for dehydratase activity is the Asp1509. Residues 1614–1656 (ATNAQSRAIPPPSTNTTQSSSQQTPIPKAAAPKKEKKRPGNPK) form a disordered region. The segment covering 1627–1643 (TNTTQSSSQQTPIPKAA) has biased composition (low complexity). Residues 1654 to 1731 (NPKLDVLPKL…QLVRVVESIV (78 aa)) form the Carrier 1 domain. Ser1691 is modified (O-(pantetheine 4'-phosphoryl)serine). Residues 1734–1762 (EGSETSNLSSDDDDENGTPSTPETDLSDA) form a disordered region. A Carrier 2 domain is found at 1764-1841 (VDAVVDNAEL…DLRQTAPGAA (78 aa)). Ser1801 bears the O-(pantetheine 4'-phosphoryl)serine mark. The methyltransferase (CMeT) domain stretch occupies residues 1998-2231 (QYQNVNELIF…GFGRVDWSDG (234 aa)). The segment at 2271–2659 (GVDLLSPAIR…FISYWRSISF (389 aa)) is thioesterase (TE) domain.

It participates in secondary metabolite biosynthesis. Functionally, non-reducing polyketide synthase; part of the gene cluster that mediates the biosynthesis of the tropolone class of fungal maleic anhydrides. The pathway begins with the synthesis of 3-methylorcinaldehyde by the non-reducing polyketide synthase (PKS) tropA. 3-methylorcinaldehyde is the substrate for the FAD-dependent monooxygenase tropB to yield a dearomatized hydroxycyclohexadione. The 2-oxoglutarate-dependent dioxygenase tropC then performs the oxidative ring expansion to provide the first tropolone metabolite stipitaldehyde. Trop D converts stipitaldehyde into stipitacetal which is in turn converted to stipitalide by the short-chain dehydrogenase/reductase tropE. The next steps involve tropF, tropG, tropH, tropI and tropJ to form successive tropolone maleic anhydrides including stipitaldehydic, stipitatonic and stipitatic acids. This chain is 3-methylorcinaldehyde synthase tropA, found in Talaromyces stipitatus (strain ATCC 10500 / CBS 375.48 / QM 6759 / NRRL 1006) (Penicillium stipitatum).